Reading from the N-terminus, the 209-residue chain is Lipid A acyltransferase PagP (209 aa).

Positions 1–24 (MHLKRALITLSLITLPIIPFSSYA) are cleaved as a signal peptide. Catalysis depends on residues histidine 81, aspartate 124, and serine 125.

The protein belongs to the lipid A palmitoyltransferase family. In terms of assembly, homodimer.

It localises to the cell outer membrane. It carries out the reaction a lipid A + a 1,2-diacyl-sn-glycero-3-phosphocholine = a hepta-acyl lipid A + a 2-acyl-sn-glycero-3-phosphocholine. The catalysed reaction is a lipid IVA + a 1,2-diacyl-sn-glycero-3-phosphocholine = a lipid IVB + a 2-acyl-sn-glycero-3-phosphocholine. The enzyme catalyses a lipid IIA + a 1,2-diacyl-sn-glycero-3-phosphocholine = a lipid IIB + a 2-acyl-sn-glycero-3-phosphocholine. Its function is as follows. Transfers a fatty acid residue from the sn-1 position of a phospholipid to the N-linked hydroxyfatty acid chain on the proximal unit of lipid A or its precursors. This Pectobacterium parmentieri (strain WPP163) (Pectobacterium wasabiae (strain WPP163)) protein is Lipid A acyltransferase PagP.